The primary structure comprises 77 residues: Translation initiation factor IF-1, chloroplastic (77 aa).

The S1-like domain maps to 1–72 (MNKQGLFQME…TKGRIVYRQR (72 aa)).

It belongs to the IF-1 family. As to quaternary structure, component of the 30S ribosomal translation pre-initiation complex which assembles on the 30S ribosome in the order IF-2 and IF-3, IF-1 and N-formylmethionyl-tRNA(fMet); mRNA recruitment can occur at any time during PIC assembly.

It is found in the plastid. Its subcellular location is the chloroplast. Functionally, one of the essential components for the initiation of protein synthesis. Stabilizes the binding of IF-2 and IF-3 on the 30S subunit to which N-formylmethionyl-tRNA(fMet) subsequently binds. Helps modulate mRNA selection, yielding the 30S pre-initiation complex (PIC). Upon addition of the 50S ribosomal subunit IF-1, IF-2 and IF-3 are released leaving the mature 70S translation initiation complex. The protein is Translation initiation factor IF-1, chloroplastic of Nephroselmis olivacea (Green alga).